Here is a 184-residue protein sequence, read N- to C-terminus: Transmembrane protein 140 (184 aa).

Residues Met1–Ser12 are Cytoplasmic-facing. Residues Phe13–Trp33 traverse the membrane as a helical segment. Topologically, residues Lys34–Arg83 are extracellular. Asn37 carries N-linked (GlcNAc...) asparagine glycosylation. A helical membrane pass occupies residues Leu84–Gln104. At Cys105–Gly117 the chain is on the cytoplasmic side. A helical transmembrane segment spans residues Phe118–Trp138. Over Lys139–Gly149 the chain is Extracellular. A helical transmembrane segment spans residues Phe150–Phe170. At Pro171 to Cys184 the chain is on the cytoplasmic side.

It localises to the membrane. The polypeptide is Transmembrane protein 140 (Tmem140) (Rattus norvegicus (Rat)).